The following is a 609-amino-acid chain: Glutamine--fructose-6-phosphate aminotransferase [isomerizing] (609 aa).

Cys2 serves as the catalytic Nucleophile; for GATase activity. In terms of domain architecture, Glutamine amidotransferase type-2 spans 2 to 219 (CGIVGYIGGR…DGECARLTRD (218 aa)). SIS domains lie at 285–424 (SSDL…LRGT) and 458–599 (LARE…VDQP). Catalysis depends on Lys604, which acts as the For Fru-6P isomerization activity.

As to quaternary structure, homodimer.

It localises to the cytoplasm. It carries out the reaction D-fructose 6-phosphate + L-glutamine = D-glucosamine 6-phosphate + L-glutamate. In terms of biological role, catalyzes the first step in hexosamine metabolism, converting fructose-6P into glucosamine-6P using glutamine as a nitrogen source. This chain is Glutamine--fructose-6-phosphate aminotransferase [isomerizing], found in Gloeobacter violaceus (strain ATCC 29082 / PCC 7421).